A 282-amino-acid chain; its full sequence is Undecaprenyl-diphosphatase (282 aa).

The next 5 helical transmembrane spans lie at tryptophan 96–isoleucine 116, methionine 123–tryptophan 143, phenylalanine 198–alanine 218, glutamine 229–leucine 249, and phenylalanine 260–leucine 280.

It belongs to the UppP family.

The protein resides in the cell membrane. It catalyses the reaction di-trans,octa-cis-undecaprenyl diphosphate + H2O = di-trans,octa-cis-undecaprenyl phosphate + phosphate + H(+). In terms of biological role, catalyzes the dephosphorylation of undecaprenyl diphosphate (UPP). Confers resistance to bacitracin. The polypeptide is Undecaprenyl-diphosphatase (Corynebacterium diphtheriae (strain ATCC 700971 / NCTC 13129 / Biotype gravis)).